The chain runs to 586 residues: Protein cereblon (586 aa).

Disordered stretches follow at residues Met-1–Trp-114 and Ser-158–Gly-194. Over residues Gly-14–Ala-37 the composition is skewed to basic and acidic residues. Residues Met-75–Ala-85 show a composition bias toward acidic residues. Polar residues predominate over residues Ser-86–Ser-96. The span at Gln-159–Glu-168 shows a compositional bias: basic and acidic residues. Over residues Thr-170 to Glu-179 the composition is skewed to acidic residues. A compositionally biased stretch (pro residues) spans Asp-180–Pro-190. Residues His-226–Ser-452 enclose the Lon N-terminal domain. Residues Glu-451–Lys-560 form the CULT domain. 4 residues coordinate Zn(2+): Cys-456, Cys-459, Cys-525, and Cys-528.

This sequence belongs to the CRBN family. As to quaternary structure, likely a component of a DCX (DDB1-CUL4-X-box) protein ligase complex. May interact with pic/DDB1. Post-translationally, ubiquitinated.

Its subcellular location is the nucleus. It participates in protein modification; protein ubiquitination. In terms of biological role, substrate recognition component of a DCX (DDB1-CUL4-X-box) E3 protein ligase complex that mediates the ubiquitination and subsequent proteasomal degradation of target proteins. Has an essential role in mediating growth by negatively regulating insulin signaling. It also has a role in maintaining presynaptic function in the neuromuscular junction synapses of third-instar larvae. In Drosophila erecta (Fruit fly), this protein is Protein cereblon.